The primary structure comprises 289 residues: Glycerol facilitator-aquaporin gla (289 aa).

The next 2 helical transmembrane spans lie at 10–30 (ITEFVGTALLIIMGNGAVANV) and 41–61 (SWMIIGWGYGLGVMLPAVAFG). Residues 68–70 (NPA) carry the NPA 1 motif. The next 3 helical transmembrane spans lie at 87–107 (AQYIIAQVLGAMFGQLLIVMV), 151–171 (FVGSFVLFFGAVAATNIFFGS), and 209–229 (MVAHLFLGFLVMGLVVALGGP). Positions 235 to 237 (NPA) match the NPA 2 motif. A helical transmembrane segment spans residues 264–284 (WYAWVPVLAPILASLAAVALF).

It belongs to the MIP/aquaporin (TC 1.A.8) family.

It is found in the cell membrane. Functionally, mixed channel protein that transports both water and glycerol. The polypeptide is Glycerol facilitator-aquaporin gla (gla) (Lactococcus lactis subsp. lactis (strain IL1403) (Streptococcus lactis)).